A 101-amino-acid polypeptide reads, in one-letter code: Small ribosomal subunit protein uS14 (101 aa).

This sequence belongs to the universal ribosomal protein uS14 family. As to quaternary structure, part of the 30S ribosomal subunit. Contacts proteins S3 and S10.

Its function is as follows. Binds 16S rRNA, required for the assembly of 30S particles and may also be responsible for determining the conformation of the 16S rRNA at the A site. The polypeptide is Small ribosomal subunit protein uS14 (Aromatoleum aromaticum (strain DSM 19018 / LMG 30748 / EbN1) (Azoarcus sp. (strain EbN1))).